The primary structure comprises 298 residues: ATP phosphoribosyltransferase (298 aa).

It belongs to the ATP phosphoribosyltransferase family. Long subfamily. It depends on Mg(2+) as a cofactor.

It localises to the cytoplasm. The enzyme catalyses 1-(5-phospho-beta-D-ribosyl)-ATP + diphosphate = 5-phospho-alpha-D-ribose 1-diphosphate + ATP. It functions in the pathway amino-acid biosynthesis; L-histidine biosynthesis; L-histidine from 5-phospho-alpha-D-ribose 1-diphosphate: step 1/9. With respect to regulation, feedback inhibited by histidine. Its function is as follows. Catalyzes the condensation of ATP and 5-phosphoribose 1-diphosphate to form N'-(5'-phosphoribosyl)-ATP (PR-ATP). Has a crucial role in the pathway because the rate of histidine biosynthesis seems to be controlled primarily by regulation of HisG enzymatic activity. This Aliivibrio fischeri (strain ATCC 700601 / ES114) (Vibrio fischeri) protein is ATP phosphoribosyltransferase.